The chain runs to 306 residues: WUSCHEL-related homeobox 13 (306 aa).

Over residues 1–11 the composition is skewed to pro residues; sequence MMALGVPPPPS. Disordered regions lie at residues 1-20, 103-142, and 190-276; these read MMAL…GPLR, PRSH…PRPE, and SRSK…ARAT. Over residues 126 to 142 the composition is skewed to basic and acidic residues; it reads GEERVPDPKPRRNPRPE. Positions 132-196 form a DNA-binding region, homeobox; WUS-type; the sequence is DPKPRRNPRP…NRKSRSKNKL (65 aa). Gly residues predominate over residues 199–210; it reads GGTGRAGLGLGG. Positions 231–242 are enriched in pro residues; that stretch reads FTPPPILPPQPV. The segment covering 243 to 270 has biased composition (low complexity); sequence QPQQQLVSPVAAPTSLSSSSSDRSSGSS.

The protein belongs to the WUS homeobox family.

The protein localises to the nucleus. Functionally, transcription factor which may be involved in developmental processes. The chain is WUSCHEL-related homeobox 13 (WOX13) from Oryza sativa subsp. japonica (Rice).